The chain runs to 378 residues: Dihydroorotate dehydrogenase (quinone) (378 aa).

Residues 77–81 and Thr101 contribute to the FMN site; that span reads AGFDK. Lys81 lines the substrate pocket. Residue 126–130 coordinates substrate; it reads NRMGF. Residues Asn158 and Asn191 each coordinate FMN. A substrate-binding site is contributed by Asn191. Ser194 functions as the Nucleophile in the catalytic mechanism. Asn196 serves as a coordination point for substrate. Residues Lys229 and Thr257 each contribute to the FMN site. 258–259 contacts substrate; sequence NT. Residues Gly287, Gly316, and 337–338 each bind FMN; that span reads YT.

It belongs to the dihydroorotate dehydrogenase family. Type 2 subfamily. As to quaternary structure, monomer. It depends on FMN as a cofactor.

The protein localises to the cell membrane. The catalysed reaction is (S)-dihydroorotate + a quinone = orotate + a quinol. The protein operates within pyrimidine metabolism; UMP biosynthesis via de novo pathway; orotate from (S)-dihydroorotate (quinone route): step 1/1. Catalyzes the conversion of dihydroorotate to orotate with quinone as electron acceptor. The protein is Dihydroorotate dehydrogenase (quinone) of Synechococcus elongatus (strain ATCC 33912 / PCC 7942 / FACHB-805) (Anacystis nidulans R2).